A 138-amino-acid polypeptide reads, in one-letter code: DNA-directed RNA polymerase subunit omega (138 aa).

Residues 117–138 (NLLGRDNFFSTPENRNTSNTDS) are disordered. Residues 124–138 (FFSTPENRNTSNTDS) show a composition bias toward polar residues.

It belongs to the RNA polymerase subunit omega family. In terms of assembly, the RNAP catalytic core consists of 2 alpha, 1 beta, 1 beta' and 1 omega subunit. When a sigma factor is associated with the core the holoenzyme is formed, which can initiate transcription.

It catalyses the reaction RNA(n) + a ribonucleoside 5'-triphosphate = RNA(n+1) + diphosphate. Its function is as follows. Promotes RNA polymerase assembly. Latches the N- and C-terminal regions of the beta' subunit thereby facilitating its interaction with the beta and alpha subunits. The protein is DNA-directed RNA polymerase subunit omega of Ehrlichia canis (strain Jake).